The sequence spans 263 residues: uncharacterized protein (263 aa).

A signal peptide spans 1-22 (MEYLKRLALFISVIILTIFIMG). Cys23 carries the N-palmitoyl cysteine lipid modification. The S-diacylglycerol cysteine moiety is linked to residue Cys23.

It belongs to the staphylococcal tandem lipoprotein family.

Its subcellular location is the cell membrane. This is an uncharacterized protein from Staphylococcus aureus (strain MSSA476).